The following is a 576-amino-acid chain: Sulfite reductase [NADPH] hemoprotein beta-component (576 aa).

Cysteine 439, cysteine 445, cysteine 485, and cysteine 489 together coordinate [4Fe-4S] cluster. Cysteine 489 contributes to the siroheme binding site.

This sequence belongs to the nitrite and sulfite reductase 4Fe-4S domain family. In terms of assembly, alpha(8)-beta(8). The alpha component is a flavoprotein, the beta component is a hemoprotein. Siroheme serves as cofactor. [4Fe-4S] cluster is required as a cofactor.

The enzyme catalyses hydrogen sulfide + 3 NADP(+) + 3 H2O = sulfite + 3 NADPH + 4 H(+). It functions in the pathway sulfur metabolism; hydrogen sulfide biosynthesis; hydrogen sulfide from sulfite (NADPH route): step 1/1. Component of the sulfite reductase complex that catalyzes the 6-electron reduction of sulfite to sulfide. This is one of several activities required for the biosynthesis of L-cysteine from sulfate. The chain is Sulfite reductase [NADPH] hemoprotein beta-component from Aliivibrio fischeri (strain ATCC 700601 / ES114) (Vibrio fischeri).